A 321-amino-acid polypeptide reads, in one-letter code: WD repeat-containing protein VIP3 (321 aa).

7 WD repeats span residues 12–55 (AHED…LVRT), 58–97 (GHSL…TIAV), 100–140 (APPS…LIST), 156–195 (SSKK…LLHQ), 198–238 (GHNM…LLGS), 241–280 (GHTS…AIQT), and 283–319 (NHND…SLYD).

Component of the nuclear PAF1 complex (PAF1C), which consists of VIP2/ELF7/PAF1, VIP3/SKI8/WDR61, VIP4/LEO1, VIP5/RTF1, VIP6/ELF8/CTR9 and CDC73. Component of the cytoplasmic SKI complex, which consists of SKI2, SKI3 and VIP3/SKI8. Interacts with VIP4 and VIP6.

It localises to the nucleus. Its subcellular location is the cytoplasm. Its function is as follows. Component of the PAF1 complex (PAF1C) which is involved in histone modifications such as methylation on histone H3 'Lys-4' (H3K4me3). Involved in regulation of flowering time. Required for the expression of the flowering repressor and MADS box gene FLC. Required for histone H3 trimethylation on 'Lys-4' (H3K4me3) and histone dimethylation on 'Lys-36' (H3K36me2) at the FLC locus. Prevents trimethylation on 'Lys-27' (H3K27me3) at the same locus. Not required for meiotic recombination or progression. Component of the SKI complex which is thought to be involved in exosome-mediated RNA decay and associates with transcriptionally active genes in a manner dependent on PAF1 complex (PAF1C). Required for proper progression of cell differentiation process. The sequence is that of WD repeat-containing protein VIP3 from Arabidopsis thaliana (Mouse-ear cress).